The following is a 102-amino-acid chain: Monothiol glutaredoxin-S10 (102 aa).

The 101-residue stretch at 1–101 folds into the Glutaredoxin domain; sequence MDVVARLASQ…ILLKEAGALW (101 aa). Residue C21 participates in [2Fe-2S] cluster binding. Residues 99-102 carry the Responsive for interaction with TGA factors motif; sequence ALWL.

The protein belongs to the glutaredoxin family. CC-type subfamily.

It localises to the cytoplasm. Its subcellular location is the nucleus. Functionally, may only reduce GSH-thiol disulfides, but not protein disulfides. This Arabidopsis thaliana (Mouse-ear cress) protein is Monothiol glutaredoxin-S10 (GRXS10).